The following is a 622-amino-acid chain: Deoxynucleoside triphosphate triphosphohydrolase SAMHD1 (622 aa).

In terms of domain architecture, SAM spans 26 to 89 (WDVEDTVAYL…LHCLQKLSQI (64 aa)). 2 residues coordinate GTP: Lys95 and Val96. Asn98 contacts dGTP. Asp116, Gln121, and Arg124 together coordinate GTP. The dGTP site is built by Gln128, Leu129, Val135, and Arg143. DATP is bound at residue Gln128. Gln128 is a binding site for dCTP. Residue Gln128 coordinates dTTP. Arg143 provides a ligand contact to dATP. Arg143 contributes to the dCTP binding site. Position 143 (Arg143) interacts with dTTP. Residues 143–296 (RFEHSIGVGY…GIDVDKWDYF (154 aa)) enclose the HD domain. Positions 146, 185, and 186 each coordinate Mn(2+). Residues His189 and His194 each coordinate dATP. 2 residues coordinate dCTP: His189 and His194. The dTTP site is built by His189 and His194. His212 is an active-site residue. Asp291 serves as a coordination point for Mn(2+). Residues Lys292, Tyr295, Asp299, Arg313, Arg332, Lys334, Asn338, Arg346, Tyr354, Gln355, His356, and Lys357 each contribute to the dGTP site. DATP contacts are provided by Lys292, Tyr295, and Asp299. Positions 292, 295, and 299 each coordinate dCTP. Residues Lys292, Tyr295, and Asp299 each contribute to the dTTP site. Arg346 contacts dATP. Arg346 is a dCTP binding site. Gln355 contacts dATP. Residue Gln355 coordinates dCTP. Position 355 (Gln355) interacts with dTTP. 3 residues coordinate GTP: Arg431, Lys435, and Lys502. Lys502 contacts dGTP. Positions 571–622 (TPLKQDWHAREDEDEEEEEKHRQNQTLPHHTPQRTGRNVKVDLFQARGETKL) are disordered. Residues 594 to 606 (NQTLPHHTPQRTG) show a composition bias toward polar residues.

This sequence belongs to the SAMHD1 family. In terms of assembly, homodimer; in absence of GTP and dNTP. Homotetramer; in GTP- and dNTP-bound form. Interacts with rbbp8/CtIP. It depends on Zn(2+) as a cofactor.

It localises to the nucleus. It is found in the chromosome. The enzyme catalyses a 2'-deoxyribonucleoside 5'-triphosphate + H2O = a 2'-deoxyribonucleoside + triphosphate + H(+). It carries out the reaction dATP + H2O = 2'-deoxyadenosine + triphosphate + H(+). The catalysed reaction is dCTP + H2O = 2'-deoxycytidine + triphosphate + H(+). It catalyses the reaction dGTP + H2O = 2'-deoxyguanosine + triphosphate + H(+). The enzyme catalyses dTTP + H2O = thymidine + triphosphate + H(+). Its activity is regulated as follows. Allosterically activated and regulated via the combined actions of GTP and dNTPs (dATP, dGTP, dTTP and dCTP): Allosteric site 1 binds GTP, while allosteric site 2 binds dNTP. Allosteric activation promotes the formation of highly active homotetramers. Protein that acts both as a host restriction factor involved in defense response to virus and as a regulator of DNA end resection at stalled replication forks. Has deoxynucleoside triphosphate (dNTPase) activity, which is required to restrict infection by viruses: dNTPase activity reduces cellular dNTP levels to levels too low for retroviral reverse transcription to occur, blocking early-stage virus replication in dendritic and other myeloid cells. Functions during S phase at stalled DNA replication forks to promote the resection of gapped or reversed forks: acts by stimulating the exonuclease activity of MRE11, activating the ATR-CHK1 pathway and allowing the forks to restart replication. Its ability to promote degradation of nascent DNA at stalled replication forks is required to prevent induction of type I interferons, thereby preventing chronic inflammation. Ability to promote DNA end resection at stalled replication forks is independent of dNTPase activity. This Danio rerio (Zebrafish) protein is Deoxynucleoside triphosphate triphosphohydrolase SAMHD1.